The primary structure comprises 347 residues: MLDSFMTQLEIVGNRSKCVNMLLWSIFGFGVLKATTLILRIMACFVDLFVLPPVNYSKYGSKNGNYCVITGASDGIGKEFAFQMAKRGFNLILISRTLSKLETLQKEISTKYNVKVEVLAIDVAKDSEDNYSAIKELCGKFPITALINNVGQSHSIPVPFLETDEDEMRRIITINNTATLMITQIIAPMIIKTTKESSKKTRGLILTMGSFGGLIPTPLLATYSGSKAFLQSWSSSLAGELKEHNVDVELIISYLVTSSMSKIRKTSMMIPNPKTFVASTLRNIGRRCGAQERYATITPYWSHALYQLAIVEAVGVYSHLVNYINYVFHKSIRIRALKKAARDAKKQ.

Residues 22-42 (LLWSIFGFGVLKATTLILRIM) traverse the membrane as a helical segment. 7 residues coordinate NADP(+): Val-68, Asp-122, Asn-149, Tyr-223, Lys-227, Val-256, and Ser-258. The Proton donor role is filled by Tyr-223. The active-site Lowers pKa of active site Tyr is Lys-227.

It belongs to the short-chain dehydrogenases/reductases (SDR) family.

The protein localises to the endoplasmic reticulum membrane. The enzyme catalyses a very-long-chain (3R)-3-hydroxyacyl-CoA + NADP(+) = a very-long-chain 3-oxoacyl-CoA + NADPH + H(+). It functions in the pathway lipid metabolism; fatty acid biosynthesis. In terms of biological role, component of the microsomal membrane bound fatty acid elongation system, which produces the 26-carbon very long-chain fatty acids (VLCFA) from palmitate. Catalyzes the reduction of the 3-ketoacyl-CoA intermediate that is formed in each cycle of fatty acid elongation. VLCFAs serve as precursors for ceramide and sphingolipids. The chain is Very-long-chain 3-oxoacyl-CoA reductase from Vanderwaltozyma polyspora (strain ATCC 22028 / DSM 70294 / BCRC 21397 / CBS 2163 / NBRC 10782 / NRRL Y-8283 / UCD 57-17) (Kluyveromyces polysporus).